We begin with the raw amino-acid sequence, 661 residues long: UvrABC system protein B (661 aa).

In terms of domain architecture, Helicase ATP-binding spans 26 to 413 (KGINEGRKHQ…TPEMVEQIIR (388 aa)). Residue 39-46 (GATGTGKT) participates in ATP binding. The Beta-hairpin signature appears at 92–115 (YYDYYQPEAYVPQTDTFIEKDASI). In terms of domain architecture, Helicase C-terminal spans 430–596 (QIDDLIGEIQ…TINKKIRDVI (167 aa)). The UVR domain occupies 625-660 (EKVIAQMESDMKEAAKALDFERAAELRDLLLELKSE).

Belongs to the UvrB family. In terms of assembly, forms a heterotetramer with UvrA during the search for lesions. Interacts with UvrC in an incision complex.

It localises to the cytoplasm. Functionally, the UvrABC repair system catalyzes the recognition and processing of DNA lesions. A damage recognition complex composed of 2 UvrA and 2 UvrB subunits scans DNA for abnormalities. Upon binding of the UvrA(2)B(2) complex to a putative damaged site, the DNA wraps around one UvrB monomer. DNA wrap is dependent on ATP binding by UvrB and probably causes local melting of the DNA helix, facilitating insertion of UvrB beta-hairpin between the DNA strands. Then UvrB probes one DNA strand for the presence of a lesion. If a lesion is found the UvrA subunits dissociate and the UvrB-DNA preincision complex is formed. This complex is subsequently bound by UvrC and the second UvrB is released. If no lesion is found, the DNA wraps around the other UvrB subunit that will check the other stand for damage. The polypeptide is UvrABC system protein B (Bacillus licheniformis (strain ATCC 14580 / DSM 13 / JCM 2505 / CCUG 7422 / NBRC 12200 / NCIMB 9375 / NCTC 10341 / NRRL NRS-1264 / Gibson 46)).